The following is a 1096-amino-acid chain: Centrosome-associated zinc finger protein Cp190 (1096 aa).

Positions 1 to 209 are involved in microtubule and centrosome binding; it reads MGEVKSVKVD…GDSSNVKQEP (209 aa). Positions 30–97 constitute a BTB domain; that stretch reads CDLTLQFRDN…MYTGTLEFEL (68 aa). Positions 126–308 are disordered; the sequence is MENVNRQQRP…PQGTQTQLEH (183 aa). Polar residues-rich tracts occupy residues 175-213 and 220-230; these read RANTQRGSTGNTMSRTSGGSNRSPYGDSSNVKQEPTSPF and YNNNKRPAQTS. Phosphoserine occurs at positions 197 and 211. Residues 207–271 are nuclear localization; sequence QEPTSPFEQL…GDNDPEYDGG (65 aa). The segment at 210–245 is involved in interaction with cliff; it reads TSPFEQLRKGYNNNKRPAQTSLLSPPSKKPSLEEVK. Phosphothreonine is present on Thr229. Ser233 bears the Phosphoserine mark. The segment covering 239 to 252 has biased composition (basic and acidic residues); that stretch reads PSLEEVKEFAEQQR. The segment at 245-468 is centrosomal targeting M domain involved in interaction with ZIPIC; the sequence is KEFAEQQRMR…IAQGAENTTG (224 aa). Low complexity predominate over residues 292 to 305; that stretch reads STSKQQSPQGTQTQ. 2 positions are modified to phosphoserine: Ser298 and Ser319. The segment at 309–390 is involved in interaction with cliff; it reads GSTTIILKQD…KPPANQSSAT (82 aa). The segment at 366–449 is disordered; that stretch reads NTPAAPTEKS…ANTAAAQKRR (84 aa). The interval 385 to 508 is centrosomal localization and interaction with microtubules; it reads NQSSATTSPH…KETIDPALCE (124 aa). Low complexity predominate over residues 412–445; that stretch reads AQQKAASSQQKSGTSQTTGNQGTGANPPANTAAA. 2 C2H2-type zinc fingers span residues 538-561 and 567-590; these read AECALCNQSYRTKGELEAHINEVH and QQCIYCNKVFEQELQLYRHMKSYH. Thr603 bears the Phosphothreonine mark. Over residues 608 to 625 the composition is skewed to acidic residues; sequence LGSQDEEEEAEGDEEQEP. A disordered region spans residues 608 to 630; that stretch reads LGSQDEEEEAEGDEEQEPEQTGK. 3 positions are modified to phosphoserine: Ser610, Ser708, and Ser723. Positions 710-733 are disordered; the sequence is PEAEHVKQETDEKSLAGTEEEYDD. Residues 711 to 723 are compositionally biased toward basic and acidic residues; sequence EAEHVKQETDEKS. At Thr727 the chain carries Phosphothreonine. Phosphoserine occurs at positions 745, 748, 757, and 760. Positions 770–927 are disordered; it reads LIAESEEQSN…EDSPIPHSDS (158 aa). Residues 777-799 show a composition bias toward basic and acidic residues; the sequence is QSNKEPKSDKPRDDISEKLKELT. A compositionally biased stretch (acidic residues) spans 802-812; the sequence is WTEDENDDDVD. The residue at position 817 (Thr817) is a Phosphothreonine. Basic and acidic residues-rich tracts occupy residues 825 to 834, 849 to 861, 882 to 907, and 914 to 927; these read ANKDPEPTVH, KGPEEATEEKASE, EKMDVDSEAADEKASKAEVQIKKEAE, and EFIKEDSPIPHSDS. Ser920, Ser925, and Ser927 each carry phosphoserine. Thr936 is modified (phosphothreonine). Ser938 is modified (phosphoserine). Basic and acidic residues-rich tracts occupy residues 960 to 973 and 1011 to 1035; these read IAEAEKPDQEKDIV and AAEKAAENNEDTRTADEKEAVEDKP. Positions 960–1096 are disordered; the sequence is IAEAEKPDQE…GVSAAAKEEL (137 aa). Phosphoserine is present on residues Ser1071 and Ser1074. Over residues 1076–1086 the composition is skewed to acidic residues; that stretch reads WGDDDEDEDEN.

As to quaternary structure, homodimerizes via the N-terminal BTB domain. Component of the gypsy chromatin insulator complex, composed of Cp190, mod(mdg4) and su(Hw). The gypsy chromatin insulator complex interacts with Topors via mod(mdg4) and su(Hw). Interacts with Cp60. Interacts with inv. Interacts with Nup98. Interacts (via BTB domain) with pita (via region between the ZAD domain and the first zinc finger domain); the interaction is direct. Interacts with ZIPIC (via region between the ZAD domain and the first zinc finger domain); the interaction is direct. Interacts (via regions between the BTB domain and first zinc finger domain) with cliff (via regions flanking MADF domain 1); the interaction is probably direct. Associates (via N-terminus) with microtubules; the interaction is direct, is enhanced by dimerization and involves multiple regions within the N-terminus. Microtubule association is enriched at growing plus ends. Expressed in spermatids but not in mature spermatozoa. Localizes within the spermatids to a sheath of microtubules around the nucleus and to microtubules within the tail.

It localises to the nucleus. Its subcellular location is the cytoplasm. The protein resides in the cytoskeleton. It is found in the microtubule organizing center. The protein localises to the centrosome. It localises to the chromosome. Its subcellular location is the nucleoplasm. Functionally, plays a central role in chromatin domain organization and boundary function through recruitment by a range of insulator DNA-binding proteins, including ZIPIC, pita, CTCF, su(Hw), cliff and others. Together with pita and CTCF cooperatively binds to and regulates the activity of the Miscadastral pigmentation (MCP) insulator. Cooperatively recruited to the front-ultraabdominal (Fub) boundary by pita, su(Hw) and cliff. Recruitment of Cp190 together with Chro/chromator induces chromatin decondensation. Component of the gypsy chromatin insulator complex which is required for the function of the gypsy chromatin insulator and other endogenous chromatin insulators. Chromatin insulators are regulatory elements that establish independent domains of transcriptional activity within eukaryotic genomes. Insulators have two defining properties; they can block the communication between an enhancer and a promoter when placed between them and can also buffer transgenes from position effect variegation (PEV). Insulators are proposed to structure the chromatin fiber into independent domains of differing transcriptional potential by promoting the formation of distinct chromatin loops to form topologically associating domains (TADs). This chromatin looping may involve the formation of insulator bodies, where homotypic interactions between individual subunits of the insulator complex could promote the clustering of widely spaced insulators at the nuclear periphery. Within the gypsy insulator complex, this protein may directly bind to insulator DNA at sites distinct from those recognized by su(Hw). Required during embryogenesis for axial expansion, an actin/myosin dependent process that distributes the dividing nuclei along the anterior-posterior axis of the syncytial embryo. Associates with centrosomes and interphase microtubules during mitosis, and recruits CP60; may have a role in maintaining centrosome and spindle integrity. The chain is Centrosome-associated zinc finger protein Cp190 from Drosophila melanogaster (Fruit fly).